Here is a 406-residue protein sequence, read N- to C-terminus: Glutamyl-tRNA reductase (406 aa).

Residues 50–53, serine 107, 112–114, and glutamine 118 contribute to the substrate site; these read TCNR and EPQ. Cysteine 51 functions as the Nucleophile in the catalytic mechanism. Residue 187-192 coordinates NADP(+); that stretch reads GAGEMG.

Belongs to the glutamyl-tRNA reductase family. As to quaternary structure, homodimer.

The enzyme catalyses (S)-4-amino-5-oxopentanoate + tRNA(Glu) + NADP(+) = L-glutamyl-tRNA(Glu) + NADPH + H(+). The protein operates within porphyrin-containing compound metabolism; protoporphyrin-IX biosynthesis; 5-aminolevulinate from L-glutamyl-tRNA(Glu): step 1/2. Catalyzes the NADPH-dependent reduction of glutamyl-tRNA(Glu) to glutamate 1-semialdehyde (GSA). The protein is Glutamyl-tRNA reductase of Aquifex aeolicus (strain VF5).